The primary structure comprises 890 residues: Tyrosine-protein kinase receptor TYRO3 (890 aa).

A signal peptide spans 1-40 (MALRRSMGRPGLPPLPLPPPPRLGLLLAALASLLLPESAA). Ig-like C2-type domains lie at 41–128 (AGLK…TEIS) and 139–220 (PFFT…ATVH). Residues 41-429 (AGLKLMGAPV…QGPPHSRTSW (389 aa)) are Extracellular-facing. A glycan (N-linked (GlcNAc...) asparagine) is linked at N63. Cystine bridges form between C64–C117 and C160–C203. N-linked (GlcNAc...) asparagine glycans are attached at residues N191, N230, N240, N293, N366, and N380. Fibronectin type-III domains are found at residues 227 to 320 (APFN…TKGL) and 325 to 416 (APQN…SHDR). A helical membrane pass occupies residues 430-450 (VPVVLGVLTALVTAAALALIL). Residues 451–890 (LRKRRKETRF…QQGLLPHSSC (440 aa)) are Cytoplasmic-facing. S466 bears the Phosphoserine mark. The Protein kinase domain occupies 518 to 790 (FTLGRMLGKG…CLRMELENIL (273 aa)). ATP contacts are provided by residues 524-532 (LGKGEFGSV) and K550. The Proton acceptor role is filled by D655. 4 positions are modified to phosphotyrosine; by autocatalysis: Y681, Y685, Y686, and Y804. Disordered regions lie at residues 815–837 (AGGS…GSGM) and 851–871 (LTPG…ESPL). Phosphoserine is present on residues S818 and S869.

It belongs to the protein kinase superfamily. Tyr protein kinase family. AXL/UFO subfamily. Monomer and homodimer. Interacts (via N-terminus) with extracellular ligands TULP1 and GAS6. Interacts with PIK3R1; this interaction increases PI3-kinase activity. Autophosphorylated. As to expression, abundant in the brain and lower levels in other tissues.

The protein resides in the cell membrane. It carries out the reaction L-tyrosyl-[protein] + ATP = O-phospho-L-tyrosyl-[protein] + ADP + H(+). Receptor tyrosine kinase that transduces signals from the extracellular matrix into the cytoplasm by binding to several ligands including TULP1 or GAS6. Regulates many physiological processes including cell survival, migration and differentiation. Ligand binding at the cell surface induces dimerization and autophosphorylation of TYRO3 on its intracellular domain that provides docking sites for downstream signaling molecules. Following activation by ligand, interacts with PIK3R1 and thereby enhances PI3-kinase activity. Activates the AKT survival pathway, including nuclear translocation of NF-kappa-B and up-regulation of transcription of NF-kappa-B-regulated genes. TYRO3 signaling plays a role in various processes such as neuron protection from excitotoxic injury, platelet aggregation and cytoskeleton reorganization. Also plays an important role in inhibition of Toll-like receptors (TLRs)-mediated innate immune response by activating STAT1, which selectively induces production of suppressors of cytokine signaling SOCS1 and SOCS3. In terms of biological role, (Microbial infection) Acts as a receptor for lassa virus and lymphocytic choriomeningitis virus, possibly through GAS6 binding to phosphatidyl-serine at the surface of virion envelope. Its function is as follows. (Microbial infection) Acts as a receptor for Ebolavirus, possibly through GAS6 binding to phosphatidyl-serine at the surface of virion envelope. This is Tyrosine-protein kinase receptor TYRO3 (TYRO3) from Homo sapiens (Human).